The following is an 809-amino-acid chain: Ferric-pyoverdine BN7/BN8 receptor (809 aa).

A signal peptide spans 1–45; sequence MNHTARKRQGWQRSVSQKLAGAVVQGIACMGASAPLLLMPAWATA. A TBDR plug domain is found at 166-273; the sequence is TPRETPQSLT…PSATINLIRK (108 aa). Positions 278–809 constitute a TBDR beta-barrel domain; that stretch reads EAQASITGEA…NVMTSFKYSF (532 aa). Residues 792 to 809 carry the TonB C-terminal box motif; sequence YGVYGTPRNVMTSFKYSF.

Belongs to the TonB-dependent receptor family.

Its subcellular location is the cell outer membrane. Functionally, specific receptor for the siderophores ferric pyoverdines (pseudobactins) BN8 and BN7, iron chelating molecules that allow the organism to extract iron from the environment, especially under iron-restricted conditions. This is Ferric-pyoverdine BN7/BN8 receptor (pupB) from Pseudomonas putida (Arthrobacter siderocapsulatus).